A 218-amino-acid polypeptide reads, in one-letter code: Pyridoxine/pyridoxamine 5'-phosphate oxidase (218 aa).

Substrate-binding positions include 14 to 17 (RREY) and Lys72. Residues 67–72 (RIVLLK), 82–83 (YT), Arg88, Lys89, and Gln111 each bind FMN. 3 residues coordinate substrate: Tyr129, Arg133, and Ser137. Residues 146–147 (QS) and Trp191 each bind FMN. 197-199 (RLH) provides a ligand contact to substrate. Arg201 serves as a coordination point for FMN.

Belongs to the pyridoxamine 5'-phosphate oxidase family. As to quaternary structure, homodimer. Requires FMN as cofactor.

The catalysed reaction is pyridoxamine 5'-phosphate + O2 + H2O = pyridoxal 5'-phosphate + H2O2 + NH4(+). It catalyses the reaction pyridoxine 5'-phosphate + O2 = pyridoxal 5'-phosphate + H2O2. It participates in cofactor metabolism; pyridoxal 5'-phosphate salvage; pyridoxal 5'-phosphate from pyridoxamine 5'-phosphate: step 1/1. The protein operates within cofactor metabolism; pyridoxal 5'-phosphate salvage; pyridoxal 5'-phosphate from pyridoxine 5'-phosphate: step 1/1. In terms of biological role, catalyzes the oxidation of either pyridoxine 5'-phosphate (PNP) or pyridoxamine 5'-phosphate (PMP) into pyridoxal 5'-phosphate (PLP). The polypeptide is Pyridoxine/pyridoxamine 5'-phosphate oxidase (Escherichia coli O7:K1 (strain IAI39 / ExPEC)).